A 636-amino-acid chain; its full sequence is MKKIYGEKIKAVVFDWAGTTVDYGCFAPLNVFIEIFKRRGIDVTMEEARKPMGKLKIDHIREMCEMDRIKNIWSDKFGKVPTEDDVNELYAEFEPMLFETLEEYTTPIPHVVETIEKLRKNGLKIGSTTGYTREMMNIVEPNAAKKGYSPDFLVTPSEVSQGRPYPWMCYKNAEALGVSPMSSMVKVGDTISDVKEGVNAGMWSVAVIKGSSELGLTQEEVENMDKEELKAKMSIVSKKFKEAGAHFVIETMAELEDILIKIENETIKSDFVPENDYILLTPGPLSTTKSVRASMLKDWCTWDVEYNNLVQDVRRRLVSLATQNTDKYTSVLMQGSGTFSVEAIIGSTISKDGKLLVIANGAYGKRMKDICNYLNIQFVDCTFKDIEAVDLNVVENLLKENKDITHISMVHCETTTGRLNPIQEVGKLAKEYNKIYIVDAMSSFGGIEIDVEDFNIDFLVSSSNKCIQGVPGFGFIIANKEELSKCKGIAKSLSLDVYAQWDTMEKNNGKWRFTSPTHVVRAFYQALLELEEEGSVEKRYARYKENQFTIASRLKSLGFDTLVNDNAQSPVITTFLYPKNAKFEFMEFYTYLKDNGFVIYPGKLTDIDTFRIGSIGEVYPTDMERLADVIEKFINR.

A phosphonoacetaldehyde hydrolase region spans residues 1-276 (MKKIYGEKIK…IKSDFVPEND (276 aa)). D15 acts as the Nucleophile in catalysis. 2 residues coordinate Mg(2+): D15 and A17. K56 functions as the Schiff-base intermediate with substrate in the catalytic mechanism. Residue D189 participates in Mg(2+) binding. Positions 277–636 (YILLTPGPLS…ADVIEKFINR (360 aa)) are 2-aminoethylphosphonate--pyruvate transaminase. K465 is subject to N6-(pyridoxal phosphate)lysine.

In the N-terminal section; belongs to the HAD-like hydrolase superfamily. PhnX family. The protein in the C-terminal section; belongs to the class-V pyridoxal-phosphate-dependent aminotransferase family. PhnW subfamily. As to quaternary structure, homodimer. It depends on Mg(2+) as a cofactor. Pyridoxal 5'-phosphate is required as a cofactor.

It catalyses the reaction (2-aminoethyl)phosphonate + pyruvate = phosphonoacetaldehyde + L-alanine. The enzyme catalyses phosphonoacetaldehyde + H2O = acetaldehyde + phosphate + H(+). Its function is as follows. Involved in phosphonate degradation. The chain is Bifunctional phosphonoacetaldehyde hydrolase/aminoethylphosphonate transaminase (phnXW) from Clostridioides difficile (strain 630) (Peptoclostridium difficile).